The primary structure comprises 118 residues: Holo-[acyl-carrier-protein] synthase (118 aa).

Mg(2+) is bound by residues Asp-5 and Glu-50.

This sequence belongs to the P-Pant transferase superfamily. AcpS family. Mg(2+) serves as cofactor.

The protein resides in the cytoplasm. The enzyme catalyses apo-[ACP] + CoA = holo-[ACP] + adenosine 3',5'-bisphosphate + H(+). Transfers the 4'-phosphopantetheine moiety from coenzyme A to a Ser of acyl-carrier-protein. This chain is Holo-[acyl-carrier-protein] synthase, found in Wolinella succinogenes (strain ATCC 29543 / DSM 1740 / CCUG 13145 / JCM 31913 / LMG 7466 / NCTC 11488 / FDC 602W) (Vibrio succinogenes).